A 316-amino-acid polypeptide reads, in one-letter code: Fe-S cluster assembly protein DRE2 (316 aa).

The tract at residues 4 to 156 (SMPVATTVAA…KPQHVASTSV (153 aa)) is N-terminal SAM-like domain. Residues 157–202 (PLKSRQPGALLNRKKTDPAKKQALWALSSPSTPKIDPEALLTAEDK) form a linker region. The [2Fe-2S] cluster site is built by Cys-209, Cys-223, Cys-226, and Cys-228. Residues 209 to 228 (CEPVRSSAPRRKKACKSCSC) are fe-S binding site A. Positions 279, 282, 290, and 293 each coordinate [4Fe-4S] cluster. Short sequence motifs (cx2C motif) lie at residues 279–282 (CGSC) and 290–293 (CAGC). The segment at 279-293 (CGSCFLGDAFRCAGC) is fe-S binding site B.

It belongs to the anamorsin family. As to quaternary structure, monomer. Interacts with TAH18. Interacts with MIA40. Requires [2Fe-2S] cluster as cofactor. The cofactor is [4Fe-4S] cluster.

It is found in the cytoplasm. The protein resides in the mitochondrion intermembrane space. Functionally, component of the cytosolic iron-sulfur (Fe-S) protein assembly (CIA) machinery required for the maturation of extramitochondrial Fe-S proteins. Part of an electron transfer chain functioning in an early step of cytosolic Fe-S biogenesis, facilitating the de novo assembly of a [4Fe-4S] cluster on the scaffold complex CFD1-NBP35. Electrons are transferred to DRE2 from NADPH via the FAD- and FMN-containing protein TAH18. TAH18-DRE2 are also required for the assembly of the diferric tyrosyl radical cofactor of ribonucleotide reductase (RNR), probably by providing electrons for reduction during radical cofactor maturation in the catalytic small subunit RNR2. The chain is Fe-S cluster assembly protein DRE2 from Laccaria bicolor (strain S238N-H82 / ATCC MYA-4686) (Bicoloured deceiver).